The primary structure comprises 301 residues: MNIVFSKEVESALKHKRPVVALESTIITHGMPYPKNVEMALNVENIIRKQGAVPATIAIINGIIHVGLENDEINELAKLKDVIKTSKRDFGYVLANKKNGGTTVSGTVLVAQKVGIPVFATGGIGGVHRGAEITFDISRDLDELSTNNVLVVCAGAKLILDLGLTLEYLETKGVEVLGYNSDKLPAFYSSSSEFNVTYNVHSASEVAAIMKAKWKFTNGGIILANPIPEQYGLEYEYILDNINKAIEQAKVEGISGKKTTPYLLSKVLELTEGKSLEANIQLVYNNAKVAAQVAVEYAKQK.

Catalysis depends on Glu23, which acts as the Proton donor. Substrate contacts are provided by Lys84 and Val104. Asp136 provides a ligand contact to Mn(2+). 138–140 (SRD) serves as a coordination point for substrate. The active-site Nucleophile is the Lys157.

It belongs to the pseudouridine-5'-phosphate glycosidase family. As to quaternary structure, homotrimer. Requires Mn(2+) as cofactor.

The catalysed reaction is D-ribose 5-phosphate + uracil = psi-UMP + H2O. Its function is as follows. Catalyzes the reversible cleavage of pseudouridine 5'-phosphate (PsiMP) to ribose 5-phosphate and uracil. Functions biologically in the cleavage direction, as part of a pseudouridine degradation pathway. The polypeptide is Pseudouridine-5'-phosphate glycosidase (Mycoplasmopsis agalactiae (strain NCTC 10123 / CIP 59.7 / PG2) (Mycoplasma agalactiae)).